The primary structure comprises 738 residues: Multifunctional procollagen lysine hydroxylase and glycosyltransferase LH3 (738 aa).

Residues 1–24 (MTSSGPGPRFLLLLPLLLPPAASA) form the signal peptide. Residues 25 to 290 (SDRPRGRDPV…FCNQDRRTLP (266 aa)) form a required for glycosyltransferase activity region. 44 to 46 (VAT) contacts UDP. The N-linked (GlcNAc...) asparagine glycan is linked to Asn-63. Residues Asp-112, Asp-115, and His-253 each contribute to the Mn(2+) site. 112–114 (DSY) is a UDP binding site. 256–259 (GPTK) contacts UDP. 2 disulfide bridges follow: Cys-279-Cys-282 and Cys-379-Cys-385. An accessory region region spans residues 295–520 (PPRVFLAVFV…EFGRLLATSR (226 aa)). An N-linked (GlcNAc...) asparagine glycan is attached at Asn-548. Cys-563 and Cys-698 are joined by a disulfide. 2 residues coordinate 2-oxoglutarate: Arg-599 and Tyr-656. Residues 647–738 (RAVMNFVVRY…RYIMVSFVDP (92 aa)) form the Fe2OG dioxygenase domain. Residues His-667 and Asp-669 each coordinate Fe cation. The tract at residues 672 to 715 (TFTLNVALNHKGLDYEGGGCRFLRYDCVISSPRKGWALLHPGRL) is important for dimerization. Asn-676 serves as a coordination point for 2-oxoglutarate. His-719 provides a ligand contact to Fe cation. Arg-729 contributes to the 2-oxoglutarate binding site.

Homodimer. It depends on Fe(2+) as a cofactor. L-ascorbate is required as a cofactor. The cofactor is Mn(2+).

The protein localises to the rough endoplasmic reticulum. Its subcellular location is the endoplasmic reticulum lumen. The protein resides in the endoplasmic reticulum membrane. It localises to the secreted. It is found in the extracellular space. The enzyme catalyses L-lysyl-[collagen] + 2-oxoglutarate + O2 = (5R)-5-hydroxy-L-lysyl-[collagen] + succinate + CO2. The catalysed reaction is (5R)-5-hydroxy-L-lysyl-[collagen] + UDP-alpha-D-galactose = (5R)-5-O-(beta-D-galactosyl)-5-hydroxy-L-lysyl-[collagen] + UDP + H(+). It catalyses the reaction (5R)-5-O-(beta-D-galactosyl)-5-hydroxy-L-lysyl-[collagen] + UDP-alpha-D-glucose = (5R)-5-O-[alpha-D-glucosyl-(1-&gt;2)-beta-D-galactosyl]-5-hydroxy-L-lysyl-[collagen] + UDP + H(+). In terms of biological role, multifunctional enzyme that catalyzes a series of post-translational modifications on Lys residues in procollagen. Plays a redundant role in catalyzing the formation of hydroxylysine residues in -Xaa-Lys-Gly- sequences in collagens. Plays a redundant role in catalyzing the transfer of galactose onto hydroxylysine groups, giving rise to galactosyl 5-hydroxylysine. Has an essential role by catalyzing the subsequent transfer of glucose moieties, giving rise to 1,2-glucosylgalactosyl-5-hydroxylysine residues. Catalyzes hydroxylation and glycosylation of Lys residues in the MBL1 collagen-like domain, giving rise to hydroxylysine and 1,2-glucosylgalactosyl-5-hydroxylysine residues. Catalyzes hydroxylation and glycosylation of Lys residues in the ADIPOQ collagen-like domain, giving rise to hydroxylysine and 1,2-glucosylgalactosyl-5-hydroxylysine residues. Essential for normal biosynthesis and secretion of type IV collagens. Essential for normal formation of basement membranes. In Pongo abelii (Sumatran orangutan), this protein is Multifunctional procollagen lysine hydroxylase and glycosyltransferase LH3 (PLOD3).